A 473-amino-acid polypeptide reads, in one-letter code: Photosystem II CP43 reaction center protein (473 aa).

Positions 1–14 (MKTLYSLRRFYPVE) are excised as a propeptide. An N-acetylthreonine modification is found at threonine 15. Threonine 15 bears the Phosphothreonine mark. A run of 5 helical transmembrane segments spans residues 69–93 (LFEV…PHLA), 134–155 (LLGP…KDRN), 178–200 (KALY…RKIT), 255–275 (KPFA…LSYS), and 291–312 (WFNN…ASQA). Glutamate 367 provides a ligand contact to [CaMn4O5] cluster. The chain crosses the membrane as a helical span at residues 447–471 (RARAAAAGFEKGIDRDFEPVLSMTP).

The protein belongs to the PsbB/PsbC family. PsbC subfamily. PSII is composed of 1 copy each of membrane proteins PsbA, PsbB, PsbC, PsbD, PsbE, PsbF, PsbH, PsbI, PsbJ, PsbK, PsbL, PsbM, PsbT, PsbX, PsbY, PsbZ, Psb30/Ycf12, at least 3 peripheral proteins of the oxygen-evolving complex and a large number of cofactors. It forms dimeric complexes. Binds multiple chlorophylls and provides some of the ligands for the Ca-4Mn-5O cluster of the oxygen-evolving complex. It may also provide a ligand for a Cl- that is required for oxygen evolution. PSII binds additional chlorophylls, carotenoids and specific lipids. is required as a cofactor.

It is found in the plastid. The protein localises to the chloroplast thylakoid membrane. Functionally, one of the components of the core complex of photosystem II (PSII). It binds chlorophyll and helps catalyze the primary light-induced photochemical processes of PSII. PSII is a light-driven water:plastoquinone oxidoreductase, using light energy to abstract electrons from H(2)O, generating O(2) and a proton gradient subsequently used for ATP formation. This chain is Photosystem II CP43 reaction center protein, found in Panax ginseng (Korean ginseng).